The chain runs to 150 residues: Ribosome maturation factor RimP (150 aa).

The protein belongs to the RimP family.

It is found in the cytoplasm. In terms of biological role, required for maturation of 30S ribosomal subunits. The chain is Ribosome maturation factor RimP from Salmonella dublin (strain CT_02021853).